We begin with the raw amino-acid sequence, 189 residues long: MRELKILVVNNYGQFCHLIHRTVRDLDMDTKIIPNVTPIEEILAEEPDGLILSGGPEMERAGLCFDYVREIDVPILGICLGHQAIALAYGGHVHAGKKGGYAEIEVEVLEEDDILRGLGPKTTVWASHADEVAILPDGFIHLARSDVCEIEAMRHPTKPIYGVQWHPEVSHTKKGEELLMNFFEVCDLY.

The Glutamine amidotransferase type-1 domain maps to Lys5–Tyr189. The active-site Nucleophile is Cys79. Catalysis depends on residues His166 and Glu168.

As to quaternary structure, heterodimer composed of a glutamine amidotransferase subunit (A) and a GMP-binding subunit (B).

The enzyme catalyses XMP + L-glutamine + ATP + H2O = GMP + L-glutamate + AMP + diphosphate + 2 H(+). It participates in purine metabolism; GMP biosynthesis; GMP from XMP (L-Gln route): step 1/1. Catalyzes the synthesis of GMP from XMP. The polypeptide is GMP synthase [glutamine-hydrolyzing] subunit A (Methanosarcina mazei (strain ATCC BAA-159 / DSM 3647 / Goe1 / Go1 / JCM 11833 / OCM 88) (Methanosarcina frisia)).